The sequence spans 879 residues: Alanine--tRNA ligase (879 aa).

Residues H566, H570, C668, and H672 each contribute to the Zn(2+) site.

It belongs to the class-II aminoacyl-tRNA synthetase family. Requires Zn(2+) as cofactor.

The protein localises to the cytoplasm. The catalysed reaction is tRNA(Ala) + L-alanine + ATP = L-alanyl-tRNA(Ala) + AMP + diphosphate. Catalyzes the attachment of alanine to tRNA(Ala) in a two-step reaction: alanine is first activated by ATP to form Ala-AMP and then transferred to the acceptor end of tRNA(Ala). Also edits incorrectly charged Ser-tRNA(Ala) and Gly-tRNA(Ala) via its editing domain. The polypeptide is Alanine--tRNA ligase (Clostridium beijerinckii (strain ATCC 51743 / NCIMB 8052) (Clostridium acetobutylicum)).